The chain runs to 340 residues: Inactive hyaluronidase B (340 aa).

Disulfide bonds link C21/C310 and C187/C199. Residues N66 and N81 are each glycosylated (N-linked (GlcNAc...) asparagine).

The protein belongs to the glycosyl hydrolase 56 family. Post-translationally, N-glycosylated on at least two Asn residues by identical heptasaccharide units composed of Man, GlcNAc, and Fuc residues in the molar ration of 3:2:2. As to expression, expressed by the venom gland.

The protein resides in the secreted. Functionally, has no hyaluronidase activity. This is Inactive hyaluronidase B from Vespula vulgaris (Yellow jacket).